A 107-amino-acid chain; its full sequence is UPF0145 protein Spro_1658 (107 aa).

It belongs to the UPF0145 family.

The protein is UPF0145 protein Spro_1658 of Serratia proteamaculans (strain 568).